Reading from the N-terminus, the 165-residue chain is Yapsin-5 (165 aa).

Residues Met-1–Ala-24 form the signal peptide. Asn-57 carries N-linked (GlcNAc...) asparagine glycosylation. The 99-residue stretch at Tyr-67–Tyr-165 folds into the Peptidase A1 domain.

It belongs to the peptidase A1 family.

This chain is Yapsin-5 (YPS5), found in Saccharomyces cerevisiae (strain ATCC 204508 / S288c) (Baker's yeast).